The sequence spans 383 residues: MMGYEQMNQMTMTTTAMMKNYNKKGLINTPQKKMTRRSVSAIDGGAAATAKEGDRRQNIKTLDLSGMSLASLSASSINLASISKLDLSNNNIQKIPESLVARMLNLWALDLQSNQLKTLPNSIGCLSKLKFLNVSGNYLQSLPKTIEDCRSLEELNANFNELTRLPDAIGFELTNLTKLSVNSNKLVLLPNSVSYLTSLRVLDARLNRLSSLPEDLENLVNLQVLNVSQNFQHLTTLPYSVGLLISLVELDVSYNGITVLPDSLGCLRRIQKLSVEGNPLISPPFEVVEQGLEALKQYMSEKMTESYKKTPTKKKSWGIGKLVKYGLSSSPGRSTGREDGKEGFINVSDYRQIDGIASPRHVSLFNPRRLLSPLSAYFSPPRY.

LRR repeat units follow at residues R56 to L79, A80 to R102, L104 to L126, S127 to C149, S151 to L173, T174 to T197, L199 to L219, N221 to L244, I245 to R268, and I270 to Q290. Positions G291 to Y298 match the GVYW; degenerate motif.

This sequence belongs to the SHOC2 family. Widely expressed except flowers.

Functionally, leucine-rich repeat protein that likely mediates protein interactions, possibly in the context of signal transduction. The protein is Plant intracellular Ras-group-related LRR protein 8 (PIRL8) of Arabidopsis thaliana (Mouse-ear cress).